The primary structure comprises 242 residues: 3-deoxy-manno-octulosonate cytidylyltransferase (242 aa).

It belongs to the KdsB family.

The protein localises to the cytoplasm. It catalyses the reaction 3-deoxy-alpha-D-manno-oct-2-ulosonate + CTP = CMP-3-deoxy-beta-D-manno-octulosonate + diphosphate. The protein operates within nucleotide-sugar biosynthesis; CMP-3-deoxy-D-manno-octulosonate biosynthesis; CMP-3-deoxy-D-manno-octulosonate from 3-deoxy-D-manno-octulosonate and CTP: step 1/1. It participates in bacterial outer membrane biogenesis; lipopolysaccharide biosynthesis. Activates KDO (a required 8-carbon sugar) for incorporation into bacterial lipopolysaccharide in Gram-negative bacteria. The chain is 3-deoxy-manno-octulosonate cytidylyltransferase from Anaeromyxobacter dehalogenans (strain 2CP-1 / ATCC BAA-258).